Reading from the N-terminus, the 428-residue chain is Probable methanogen homoaconitase large subunit (428 aa).

[4Fe-4S] cluster-binding residues include Cys304, Cys364, and Cys367.

Belongs to the aconitase/IPM isomerase family. LeuC type 2 subfamily. As to quaternary structure, heterotetramer of 2 HacA and 2 HacB proteins.

The catalysed reaction is (2R)-homocitrate = (2R,3S)-homoisocitrate. The enzyme catalyses (2R)-homocitrate = cis-homoaconitate + H2O. It catalyses the reaction (2R,3S)-homoisocitrate = cis-homoaconitate + H2O. It carries out the reaction cis-(homo)2aconitate + H2O = (2R,3S)-iso(homo)2citrate. The catalysed reaction is cis-(homo)3aconitate + H2O = (2R,3S)-iso(homo)3citrate. It functions in the pathway organic acid metabolism; 2-oxosuberate biosynthesis. Its function is as follows. Component of a hydro-lyase with broad substrate specificity for cis-unsaturated tricarboxylic acids. Catalyzes both the reversible dehydration of (R)-homocitrate ((R)-2-hydroxybutane-1,2,4-tricarboxylate) to produce cis-homoaconitate ((Z)-but-1-ene-1,2,4-tricarboxylate), and its hydration to homoisocitrate ((1R,2S)-1-hydroxybutane-1,2,4-tricarboxylate). Is also able to hydrate the analogous longer chain substrates cis-homo(2)-aconitate, cis-homo(3)-aconitate. These reactions are part of the biosynthesis pathway of coenzyme B. The sequence is that of Probable methanogen homoaconitase large subunit (hacA) from Methanothermobacter thermautotrophicus (strain ATCC 29096 / DSM 1053 / JCM 10044 / NBRC 100330 / Delta H) (Methanobacterium thermoautotrophicum).